The sequence spans 90 residues: Probable Fe(2+)-trafficking protein (90 aa).

This sequence belongs to the Fe(2+)-trafficking protein family. Monomer.

Could be a mediator in iron transactions between iron acquisition and iron-requiring processes, such as synthesis and/or repair of Fe-S clusters in biosynthetic enzymes. This is Probable Fe(2+)-trafficking protein from Enterobacter sp. (strain 638).